The primary structure comprises 827 residues: Centrosomal protein of 95 kDa (827 aa).

Disordered stretches follow at residues 115-145 (ISESSPNKSETEQYSKDSHGEEAGEDLERTE), 183-249 (GDTA…MVPS), 308-372 (FLTS…MSEK), 388-476 (LGDR…DSCH), and 489-558 (ELRK…KASP). Positions 123–145 (SETEQYSKDSHGEEAGEDLERTE) are enriched in basic and acidic residues. Residues 187–199 (HTFSQRSNGAQNS) show a composition bias toward polar residues. Composition is skewed to basic and acidic residues over residues 327–343 (EATRTRKPSKGERDENR) and 360–372 (PLTEQELHAMSEK). 3 positions are modified to phosphoserine: Ser447, Ser449, and Ser451. 2 coiled-coil regions span residues 584–633 (LTKM…VKKE) and 701–795 (LQIQ…DDDA).

It is found in the cytoplasm. The protein resides in the cytoskeleton. It localises to the microtubule organizing center. The protein localises to the centrosome. Its subcellular location is the spindle pole. The chain is Centrosomal protein of 95 kDa (Cep95) from Mus musculus (Mouse).